A 360-amino-acid chain; its full sequence is N5-carboxyaminoimidazole ribonucleotide synthase (360 aa).

ATP is bound by residues Arg98, Lys138, 143–149 (GYDGKGQ), 173–176 (EGFV), Glu181, His204, and 255–256 (NE). Positions 102 to 285 (KSMFKDLGIP…QFENHLRAVA (184 aa)) constitute an ATP-grasp domain.

Belongs to the PurK/PurT family. Homodimer.

The enzyme catalyses 5-amino-1-(5-phospho-beta-D-ribosyl)imidazole + hydrogencarbonate + ATP = 5-carboxyamino-1-(5-phospho-D-ribosyl)imidazole + ADP + phosphate + 2 H(+). Its pathway is purine metabolism; IMP biosynthesis via de novo pathway; 5-amino-1-(5-phospho-D-ribosyl)imidazole-4-carboxylate from 5-amino-1-(5-phospho-D-ribosyl)imidazole (N5-CAIR route): step 1/2. Functionally, catalyzes the ATP-dependent conversion of 5-aminoimidazole ribonucleotide (AIR) and HCO(3)(-) to N5-carboxyaminoimidazole ribonucleotide (N5-CAIR). This Pseudomonas aeruginosa (strain ATCC 15692 / DSM 22644 / CIP 104116 / JCM 14847 / LMG 12228 / 1C / PRS 101 / PAO1) protein is N5-carboxyaminoimidazole ribonucleotide synthase.